A 174-amino-acid chain; its full sequence is CASP-like protein 1 (174 aa).

Residues 1–25 (MDSKSGRSESAINIPESNSTKHKST) are disordered. Over 1-46 (MDSKSGRSESAINIPESNSTKHKSTAVHTATKVAAVAPRGGGWRRG) the chain is Cytoplasmic. Over residues 8-18 (SESAINIPESN) the composition is skewed to polar residues. A helical transmembrane segment spans residues 47–67 (VSIFDFILRICALAAALAATA). Over 68 to 96 (TMGTTDQTLPFFTQIIQFQASYDDLPVFT) the chain is Extracellular. Residues 97–117 (FFVVANGIASGYLVLSLPFSI) traverse the membrane as a helical segment. Topologically, residues 118 to 119 (AT) are cytoplasmic. Residues 120 to 139 (IVRPHAAAIKLLLIIFDTQF) form a helical membrane-spanning segment. The Extracellular segment spans residues 140-150 (NDFCQRVSGAV). Residues 151–171 (VASFVAAVILIFLVVLSAVAI) traverse the membrane as a helical segment. The Cytoplasmic segment spans residues 172–174 (RKH).

Belongs to the Casparian strip membrane proteins (CASP) family. Homodimer and heterodimers.

The protein resides in the cell membrane. This Triphysaria pusilla (Dwarf owl's-clover) protein is CASP-like protein 1.